Here is a 253-residue protein sequence, read N- to C-terminus: uncharacterized protein (253 aa).

The helical transmembrane segment at tryptophan 62–tyrosine 78 threads the bilayer. Low complexity predominate over residues threonine 141–glutamate 158. Residues threonine 141 to histidine 225 are disordered. Residues asparagine 200 to histidine 216 are compositionally biased toward acidic residues.

It is found in the host membrane. This is an uncharacterized protein from Aedes vexans (Inland floodwater mosquito).